A 189-amino-acid chain; its full sequence is Probable nicotinate-nucleotide adenylyltransferase (189 aa).

It belongs to the NadD family.

It carries out the reaction nicotinate beta-D-ribonucleotide + ATP + H(+) = deamido-NAD(+) + diphosphate. Its pathway is cofactor biosynthesis; NAD(+) biosynthesis; deamido-NAD(+) from nicotinate D-ribonucleotide: step 1/1. In terms of biological role, catalyzes the reversible adenylation of nicotinate mononucleotide (NaMN) to nicotinic acid adenine dinucleotide (NaAD). This Bacillus cytotoxicus (strain DSM 22905 / CIP 110041 / 391-98 / NVH 391-98) protein is Probable nicotinate-nucleotide adenylyltransferase.